Reading from the N-terminus, the 268-residue chain is Fatty acid elongase sre1 (268 aa).

Helical transmembrane passes span 31–51 (VFPFSTSVIYVLVIFALQAIM), 62–82 (FSIIHNINLIILSFSMMSGVM), 110–130 (IGFWIYIFYLSKYYELVDTVI), 137–157 (PIIFLHIFHHMAMVPVTWQWL), 161–181 (WLVGSWWCTLVNSFIHVLMYY), 198–218 (ITKAQIVQFLTGTAMVSYWFV), and 227–247 (APLSPAIVSNTINSFFIILFG).

It belongs to the ELO family.

It localises to the membrane. The catalysed reaction is a very-long-chain acyl-CoA + malonyl-CoA + H(+) = a very-long-chain 3-oxoacyl-CoA + CO2 + CoA. Functionally, could be implicated in synthesis of very long chain fatty acids. This chain is Fatty acid elongase sre1 (sre1), found in Dictyostelium discoideum (Social amoeba).